Consider the following 404-residue polypeptide: Argininosuccinate synthase (404 aa).

Residues 12–20 (AYSGGLDTS) and Ala39 contribute to the ATP site. L-citrulline-binding residues include Tyr91 and Ser96. Gly121 contacts ATP. Residues Thr123, Asn127, and Asp128 each contribute to the L-aspartate site. Asn127 is a binding site for L-citrulline. L-citrulline contacts are provided by Arg131, Ser180, Ser189, Glu265, and Tyr277.

Belongs to the argininosuccinate synthase family. Type 1 subfamily. In terms of assembly, homotetramer.

The protein localises to the cytoplasm. The enzyme catalyses L-citrulline + L-aspartate + ATP = 2-(N(omega)-L-arginino)succinate + AMP + diphosphate + H(+). The protein operates within amino-acid biosynthesis; L-arginine biosynthesis; L-arginine from L-ornithine and carbamoyl phosphate: step 2/3. This Vibrio parahaemolyticus serotype O3:K6 (strain RIMD 2210633) protein is Argininosuccinate synthase.